Consider the following 307-residue polypeptide: Cytochrome c1, heme protein, mitochondrial (307 aa).

The transit peptide at M1 to Y56 directs the protein to the mitochondrion. Topologically, residues G57 to M269 are mitochondrial intermembrane. The region spanning A89 to S259 is the Cytochrome c domain. Residues C102, C105, H106, and M225 each contribute to the heme c site. The chain crosses the membrane as a helical span at residues G270 to Y287. At K288 to K307 the chain is on the mitochondrial matrix side.

Belongs to the cytochrome c family. As to quaternary structure, component of the ubiquinol-cytochrome c oxidoreductase (cytochrome b-c1 complex, complex III, CIII), a multisubunit enzyme composed of 3 respiratory subunits cytochrome b, cytochrome c1 and Rieske protein, 2 core protein subunits, and additional low-molecular weight protein subunits. The complex exists as an obligatory dimer and forms supercomplexes (SCs) in the inner mitochondrial membrane with cytochrome c oxidase (complex IV, CIV). Heme c is required as a cofactor.

The protein localises to the mitochondrion inner membrane. It catalyses the reaction a quinol + 2 Fe(III)-[cytochrome c](out) = a quinone + 2 Fe(II)-[cytochrome c](out) + 2 H(+)(out). Functionally, component of the ubiquinol-cytochrome c oxidoreductase, a multisubunit transmembrane complex that is part of the mitochondrial electron transport chain which drives oxidative phosphorylation. The respiratory chain contains 3 multisubunit complexes succinate dehydrogenase (complex II, CII), ubiquinol-cytochrome c oxidoreductase (cytochrome b-c1 complex, complex III, CIII) and cytochrome c oxidase (complex IV, CIV), that cooperate to transfer electrons derived from NADH and succinate to molecular oxygen, creating an electrochemical gradient over the inner membrane that drives transmembrane transport and the ATP synthase. The cytochrome b-c1 complex catalyzes electron transfer from ubiquinol to cytochrome c, linking this redox reaction to translocation of protons across the mitochondrial inner membrane, with protons being carried across the membrane as hydrogens on the quinol. In the process called Q cycle, 2 protons are consumed from the matrix, 4 protons are released into the intermembrane space and 2 electrons are passed to cytochrome c. Cytochrome c1 is a catalytic core subunit containing a c-type heme. It transfers electrons from the [2Fe-2S] iron-sulfur cluster of the Rieske protein to cytochrome c. This is Cytochrome c1, heme protein, mitochondrial (cyt1) from Schizosaccharomyces pombe (strain 972 / ATCC 24843) (Fission yeast).